The chain runs to 264 residues: 3-methyl-2-oxobutanoate hydroxymethyltransferase (264 aa).

Mg(2+) is bound by residues aspartate 45 and aspartate 84. 3-methyl-2-oxobutanoate-binding positions include 45-46 (DS), aspartate 84, and lysine 113. Glutamate 115 is a binding site for Mg(2+). Catalysis depends on glutamate 182, which acts as the Proton acceptor.

It belongs to the PanB family. Homodecamer; pentamer of dimers. Requires Mg(2+) as cofactor.

The protein localises to the cytoplasm. It carries out the reaction 3-methyl-2-oxobutanoate + (6R)-5,10-methylene-5,6,7,8-tetrahydrofolate + H2O = 2-dehydropantoate + (6S)-5,6,7,8-tetrahydrofolate. Its pathway is cofactor biosynthesis; (R)-pantothenate biosynthesis; (R)-pantoate from 3-methyl-2-oxobutanoate: step 1/2. In terms of biological role, catalyzes the reversible reaction in which hydroxymethyl group from 5,10-methylenetetrahydrofolate is transferred onto alpha-ketoisovalerate to form ketopantoate. The protein is 3-methyl-2-oxobutanoate hydroxymethyltransferase of Caldicellulosiruptor saccharolyticus (strain ATCC 43494 / DSM 8903 / Tp8T 6331).